Here is a 362-residue protein sequence, read N- to C-terminus: Nuclear hormone receptor family member nhr-77 (362 aa).

The segment at residues aspartate 8 to glutamine 82 is a DNA-binding region (nuclear receptor). 2 NR C4-type zinc fingers span residues cysteine 11–cysteine 32 and cysteine 48–cysteine 69. Residues glutamate 145–phenylalanine 362 enclose the NR LBD domain.

The protein belongs to the nuclear hormone receptor family.

The protein resides in the nucleus. Its function is as follows. Orphan nuclear receptor. The chain is Nuclear hormone receptor family member nhr-77 (nhr-77) from Caenorhabditis elegans.